Here is a 258-residue protein sequence, read N- to C-terminus: Polysialic acid transport protein KpsM (258 aa).

At 1–30 (MARSGFEVQKVTVEALFLREIRTRFGKFRL) the chain is on the cytoplasmic side. Residues 30-251 (LGYLWAILEP…FIGLALYRTR (222 aa)) form the ABC transmembrane type-2 domain. Residues 31-54 (GYLWAILEPSAHLLILLGILGYVM) form a helical membrane-spanning segment. Topologically, residues 55-61 (HRTMPDI) are periplasmic. Residues 62–81 (SFPVFLLNGLIPFFIFSSIS) traverse the membrane as a helical segment. Residues 82–108 (KRSIGAIEANQGLFNYRPVKPIDTIIA) lie on the Cytoplasmic side of the membrane. Residues 109-132 (RALLETLIYVAVYILLMLIVWMTG) form a helical membrane-spanning segment. The Periplasmic portion of the chain corresponds to 133–143 (EYFEITNFLQL). A helical membrane pass occupies residues 144–165 (VLTWSLLIILSCGVGLIFMVVG). The Cytoplasmic segment spans residues 166 to 174 (KTFPEMQKV). A helical membrane pass occupies residues 175-195 (LPILLKPLYFISCIMFPLHSI). Topologically, residues 196–226 (PKQYWSYLLWNPLVHVVELSREAVMPGYISE) are periplasmic. A helical membrane pass occupies residues 227–247 (GVSLNYLAMFTLVTLFIGLAL). Residues 248–258 (YRTREEAMLTS) lie on the Cytoplasmic side of the membrane.

The protein belongs to the ABC-2 integral membrane protein family.

The protein localises to the cell inner membrane. KpsM and KpsT constitute a system for the transport of polysialic acid across the cytoplasmic membrane. The polypeptide is Polysialic acid transport protein KpsM (kpsM) (Escherichia coli).